The sequence spans 544 residues: CTP synthase (544 aa).

The amidoligase domain stretch occupies residues 1 to 267 (MAKFVFITGG…CREVLDVLDL (267 aa)). A CTP-binding site is contributed by Ser-13. UTP is bound at residue Ser-13. Residues 14-19 (SIGKGI) and Asp-71 contribute to the ATP site. Mg(2+)-binding residues include Asp-71 and Glu-141. CTP-binding positions include 148–150 (DIE), 188–193 (KTKPTQ), and Lys-224. UTP contacts are provided by residues 188-193 (KTKPTQ) and Lys-224. A Glutamine amidotransferase type-1 domain is found at 292-534 (KVALVGKYIQ…IEAAQQRLPS (243 aa)). An L-glutamine-binding site is contributed by Gly-354. The active-site Nucleophile; for glutamine hydrolysis is the Cys-381. Residues 382–385 (LGMQ), Glu-405, and Arg-462 contribute to the L-glutamine site. Catalysis depends on residues His-507 and Glu-509.

Belongs to the CTP synthase family. Homotetramer.

The catalysed reaction is UTP + L-glutamine + ATP + H2O = CTP + L-glutamate + ADP + phosphate + 2 H(+). It catalyses the reaction L-glutamine + H2O = L-glutamate + NH4(+). It carries out the reaction UTP + NH4(+) + ATP = CTP + ADP + phosphate + 2 H(+). It functions in the pathway pyrimidine metabolism; CTP biosynthesis via de novo pathway; CTP from UDP: step 2/2. Allosterically activated by GTP, when glutamine is the substrate; GTP has no effect on the reaction when ammonia is the substrate. The allosteric effector GTP functions by stabilizing the protein conformation that binds the tetrahedral intermediate(s) formed during glutamine hydrolysis. Inhibited by the product CTP, via allosteric rather than competitive inhibition. Functionally, catalyzes the ATP-dependent amination of UTP to CTP with either L-glutamine or ammonia as the source of nitrogen. Regulates intracellular CTP levels through interactions with the four ribonucleotide triphosphates. This chain is CTP synthase, found in Parasynechococcus marenigrum (strain WH8102).